A 360-amino-acid polypeptide reads, in one-letter code: Carbamoyl phosphate synthase small chain (360 aa).

A CPSase region spans residues 1–169 (MTKRLLILED…TKTAYPAPGI (169 aa)). Residues Ser-46, Gly-220, and Gly-222 each contribute to the L-glutamine site. The region spanning 172–358 (NIVLVDFGLK…LEMIDSWRCT (187 aa)) is the Glutamine amidotransferase type-1 domain. The active-site Nucleophile is Cys-247. Met-248, Gln-251, Asn-289, Gly-291, and Tyr-292 together coordinate L-glutamine. Active-site residues include His-331 and Asp-333.

It belongs to the CarA family. Composed of two chains; the small (or glutamine) chain promotes the hydrolysis of glutamine to ammonia, which is used by the large (or ammonia) chain to synthesize carbamoyl phosphate. Tetramer of heterodimers (alpha,beta)4.

The catalysed reaction is hydrogencarbonate + L-glutamine + 2 ATP + H2O = carbamoyl phosphate + L-glutamate + 2 ADP + phosphate + 2 H(+). It carries out the reaction L-glutamine + H2O = L-glutamate + NH4(+). It functions in the pathway amino-acid biosynthesis; L-arginine biosynthesis; carbamoyl phosphate from bicarbonate: step 1/1. It participates in pyrimidine metabolism; UMP biosynthesis via de novo pathway; (S)-dihydroorotate from bicarbonate: step 1/3. Functionally, small subunit of the glutamine-dependent carbamoyl phosphate synthetase (CPSase). CPSase catalyzes the formation of carbamoyl phosphate from the ammonia moiety of glutamine, carbonate, and phosphate donated by ATP, constituting the first step of 2 biosynthetic pathways, one leading to arginine and/or urea and the other to pyrimidine nucleotides. The small subunit (glutamine amidotransferase) binds and cleaves glutamine to supply the large subunit with the substrate ammonia. This is Carbamoyl phosphate synthase small chain from Streptococcus pyogenes serotype M3 (strain SSI-1).